Here is a 569-residue protein sequence, read N- to C-terminus: Probable protein phosphatase 2C BIPP2C1 (569 aa).

Disordered stretches follow at residues 120-214 and 251-279; these read EVSP…KVTG and SLDD…GSSI. The segment covering 179–188 has biased composition (basic and acidic residues); that stretch reads ESERGSDADG. The PPM-type phosphatase domain occupies 329–564; it reads AAMLPHPSKV…DDVTVVVSVV (236 aa). Mn(2+) contacts are provided by Asp358, Gly359, Asp488, and Asp555.

It belongs to the PP2C family. Mg(2+) serves as cofactor. The cofactor is Mn(2+).

It carries out the reaction O-phospho-L-seryl-[protein] + H2O = L-seryl-[protein] + phosphate. The enzyme catalyses O-phospho-L-threonyl-[protein] + H2O = L-threonyl-[protein] + phosphate. Functionally, may play a role in responses to biotic and abiotic stresses. This is Probable protein phosphatase 2C BIPP2C1 (BIPP2C1) from Oryza sativa subsp. japonica (Rice).